Here is a 154-residue protein sequence, read N- to C-terminus: 6,7-dimethyl-8-ribityllumazine synthase (154 aa).

Residues F22, 56 to 58, and 80 to 82 contribute to the 5-amino-6-(D-ribitylamino)uracil site; these read AFE and TVI. 85 to 86 contacts (2S)-2-hydroxy-3-oxobutyl phosphate; it reads AT. Residue H88 is the Proton donor of the active site. A 5-amino-6-(D-ribitylamino)uracil-binding site is contributed by F113. R127 is a binding site for (2S)-2-hydroxy-3-oxobutyl phosphate.

This sequence belongs to the DMRL synthase family. In terms of assembly, forms an icosahedral capsid composed of 60 subunits, arranged as a dodecamer of pentamers.

The enzyme catalyses (2S)-2-hydroxy-3-oxobutyl phosphate + 5-amino-6-(D-ribitylamino)uracil = 6,7-dimethyl-8-(1-D-ribityl)lumazine + phosphate + 2 H2O + H(+). It participates in cofactor biosynthesis; riboflavin biosynthesis; riboflavin from 2-hydroxy-3-oxobutyl phosphate and 5-amino-6-(D-ribitylamino)uracil: step 1/2. Catalyzes the formation of 6,7-dimethyl-8-ribityllumazine by condensation of 5-amino-6-(D-ribitylamino)uracil with 3,4-dihydroxy-2-butanone 4-phosphate. This is the penultimate step in the biosynthesis of riboflavin. The protein is 6,7-dimethyl-8-ribityllumazine synthase of Bacillus pumilus (strain SAFR-032).